The primary structure comprises 576 residues: uncharacterized protein (576 aa).

Over 1 to 8 (MSLSLGAA) the chain is Cytoplasmic. Residues 9-29 (IYIALKPIFKIYTIMLVGYLV) traverse the membrane as a helical segment. Topologically, residues 30-45 (AKFDIVSMENAKGISN) are extracellular. A helical membrane pass occupies residues 46-66 (MVVNAILPCLTFNKIVSNISW). Residues 67-71 (RDIKE) are Cytoplasmic-facing. A helical transmembrane segment spans residues 72–92 (IGVIILSAFILFVLGATGALF). Residues 93–103 (TTFATTVPKKF) lie on the Extracellular side of the membrane. A helical transmembrane segment spans residues 104 to 124 (FWGLIFAGFFPNISDLPIAYI). Over 125-141 (QSMGNGSIFTAEEADKG) the chain is Cytoplasmic. The helical transmembrane segment at 142 to 162 (VAYSCIFLFIQSFLMMNFGMW) threads the bilayer. Over 163 to 400 (RVVGLDFRDT…FIINCLRPAS (238 aa)) the chain is Extracellular. A helical membrane pass occupies residues 401 to 421 (LGAILGIICALIPWVKACFVT). The Cytoplasmic portion of the chain corresponds to 422–437 (TYVHVHKAPDGEPVLN). Residues 438 to 458 (FLMDFTEYIGNACVPLGLLLL) traverse the membrane as a helical segment. At 459–476 (GGTLARLEIKSLPPGFIK) the chain is on the extracellular side. Residues 477 to 497 (SALLMTCFRLIVIPIIGVLWV) form a helical membrane-spanning segment. Topologically, residues 498-512 (NKLYSIDWLDTGIGK) are cytoplasmic. Residues 513 to 533 (FDMILTWSMPSATAQVYFTAF) form a helical membrane-spanning segment. Over 534–545 (YTPACGDHIQMN) the chain is Extracellular. Residues 546–566 (CLSVLFVMQYAILFITVAFVV) form a helical membrane-spanning segment. Residues 567–576 (TYTLKVDLKV) are Cytoplasmic-facing.

The protein belongs to the auxin efflux carrier (TC 2.A.69) family.

The protein localises to the membrane. This is an uncharacterized protein from Saccharomyces cerevisiae (strain ATCC 204508 / S288c) (Baker's yeast).